The primary structure comprises 412 residues: Serine hydroxymethyltransferase (412 aa).

(6S)-5,6,7,8-tetrahydrofolate-binding positions include Leu117 and 121–123 (GHL). At Lys226 the chain carries N6-(pyridoxal phosphate)lysine. 349-351 (SPF) is a (6S)-5,6,7,8-tetrahydrofolate binding site.

It belongs to the SHMT family. In terms of assembly, homodimer. It depends on pyridoxal 5'-phosphate as a cofactor.

The protein localises to the cytoplasm. It catalyses the reaction (6R)-5,10-methylene-5,6,7,8-tetrahydrofolate + glycine + H2O = (6S)-5,6,7,8-tetrahydrofolate + L-serine. It functions in the pathway one-carbon metabolism; tetrahydrofolate interconversion. The protein operates within amino-acid biosynthesis; glycine biosynthesis; glycine from L-serine: step 1/1. Functionally, catalyzes the reversible interconversion of serine and glycine with tetrahydrofolate (THF) serving as the one-carbon carrier. This reaction serves as the major source of one-carbon groups required for the biosynthesis of purines, thymidylate, methionine, and other important biomolecules. Also exhibits THF-independent aldolase activity toward beta-hydroxyamino acids, producing glycine and aldehydes, via a retro-aldol mechanism. The sequence is that of Serine hydroxymethyltransferase from Geobacillus kaustophilus (strain HTA426).